A 339-amino-acid chain; its full sequence is Glycerol-3-phosphate dehydrogenase [NAD(P)+] (339 aa).

Residues Ser13, Trp14, and Lys108 each coordinate NADPH. 3 residues coordinate sn-glycerol 3-phosphate: Lys108, Gly139, and Ser141. Residue Ala143 coordinates NADPH. Positions 194, 247, 257, 258, and 259 each coordinate sn-glycerol 3-phosphate. Lys194 (proton acceptor) is an active-site residue. Arg258 serves as a coordination point for NADPH. NADPH contacts are provided by Val282 and Glu284.

This sequence belongs to the NAD-dependent glycerol-3-phosphate dehydrogenase family.

The protein localises to the cytoplasm. The enzyme catalyses sn-glycerol 3-phosphate + NAD(+) = dihydroxyacetone phosphate + NADH + H(+). It catalyses the reaction sn-glycerol 3-phosphate + NADP(+) = dihydroxyacetone phosphate + NADPH + H(+). The protein operates within membrane lipid metabolism; glycerophospholipid metabolism. In terms of biological role, catalyzes the reduction of the glycolytic intermediate dihydroxyacetone phosphate (DHAP) to sn-glycerol 3-phosphate (G3P), the key precursor for phospholipid synthesis. This Streptococcus equi subsp. zooepidemicus (strain H70) protein is Glycerol-3-phosphate dehydrogenase [NAD(P)+].